Here is a 115-residue protein sequence, read N- to C-terminus: Pycsar effector protein TpPycTM (115 aa).

The next 2 helical transmembrane spans lie at 44–64 (IGNL…YATN) and 74–94 (VWNI…VILV).

The protein resides in the cell inner membrane. Pycsar (pyrimidine cyclase system for antiphage resistance) provides immunity against bacteriophage. The pyrimidine cyclase (PycC) synthesizes cyclic nucleotides in response to infection; these serve as specific second messenger signals. The signals activate the adjacent effector, leading to bacterial cell death and abortive phage infection. A clade C Pycsar system. In terms of biological role, the effector gene of a two-gene Pycsar system. Expression of this and adjacent uridylate cyclase TpPycC (AC A0A1T4LJ54) probably confers resistance to bacteriophage. The genes are probably only expressed in response to bacteriophage infection. Probably only responds to cUMP (produced by its cognate NTP cyclase), acts by impairing membrane integrity. This chain is Pycsar effector protein TpPycTM, found in Treponema porcinum.